The chain runs to 194 residues: Methylated-DNA--protein-cysteine methyltransferase (194 aa).

Positions 125 and 139 each coordinate DNA. Cysteine 156 functions as the Nucleophile; methyl group acceptor in the catalytic mechanism. Serine 162 contributes to the DNA binding site.

Belongs to the MGMT family.

Its subcellular location is the nucleus. It catalyses the reaction a 6-O-methyl-2'-deoxyguanosine in DNA + L-cysteinyl-[protein] = S-methyl-L-cysteinyl-[protein] + a 2'-deoxyguanosine in DNA. The enzyme catalyses a 4-O-methyl-thymidine in DNA + L-cysteinyl-[protein] = a thymidine in DNA + S-methyl-L-cysteinyl-[protein]. Functionally, involved in the cellular defense against the biological effects of O6-methylguanine (O6-MeG) and O4-methylthymine (O4-MeT) in DNA. Repairs the methylated nucleobase in DNA by stoichiometrically transferring the methyl group to a cysteine residue in the enzyme. This is a suicide reaction: the enzyme is irreversibly inactivated. This chain is Methylated-DNA--protein-cysteine methyltransferase (MGT1), found in Scheffersomyces stipitis (strain ATCC 58785 / CBS 6054 / NBRC 10063 / NRRL Y-11545) (Yeast).